The primary structure comprises 338 residues: Ferredoxin--NADP reductase (338 aa).

Positions 14, 33, 41, 46, 86, 120, 284, and 325 each coordinate FAD.

It belongs to the ferredoxin--NADP reductase type 2 family. As to quaternary structure, homodimer. The cofactor is FAD.

The enzyme catalyses 2 reduced [2Fe-2S]-[ferredoxin] + NADP(+) + H(+) = 2 oxidized [2Fe-2S]-[ferredoxin] + NADPH. The chain is Ferredoxin--NADP reductase from Pelagibacter ubique (strain HTCC1062).